A 430-amino-acid chain; its full sequence is Sphingosine-1-phosphate phosphatase 1 (430 aa).

The disordered stretch occupies residues 34–100; that stretch reads GSPKAGEDAE…PRRAGSLRRN (67 aa). Position 101 is a phosphoserine (Ser-101). Phosphothreonine is present on Thr-103. 4 consecutive transmembrane segments (helical) span residues 121 to 141, 152 to 172, 193 to 213, and 216 to 236; these read FCFG…PFWI, LVII…IIRW, MPST…LLTY, and WQYP…LVCL. The interval 167-175 is phosphatase sequence motif I; that stretch reads KDIIRWPRP. A phosphatase sequence motif II region spans residues 194-197; the sequence is PSTH. The active-site Proton donor is His-197. Residues 237-248 form a phosphatase sequence motif III region; it reads SRIYMGMHSILD. The active-site Nucleophile is the His-244. A run of 5 helical transmembrane segments spans residues 246–266, 279–299, 311–331, 348–368, and 409–429; these read ILDV…FYPL, YAPL…FTLD, ILGS…LGIS, VTLF…VLFV, and YGTV…FIGI.

The protein belongs to the type 2 lipid phosphate phosphatase family.

Its subcellular location is the endoplasmic reticulum membrane. It is found in the cell membrane. It carries out the reaction sphinganine 1-phosphate + H2O = sphinganine + phosphate. It catalyses the reaction sphing-4-enine 1-phosphate + H2O = sphing-4-enine + phosphate. Specifically dephosphorylates sphingosine 1-phosphate (S1P), dihydro-S1P, and phyto-S1P. Does not act on ceramide 1-phosphate, lysophosphatidic acid or phosphatidic acid. Sphingosine-1-phosphate phosphatase activity is needed for efficient recycling of sphingosine into the sphingolipid synthesis pathway. Regulates the intracellular levels of the bioactive sphingolipid metabolite S1P that regulates diverse biological processes acting both as an extracellular receptor ligand or as an intracellular second messenger. Involved in efficient ceramide synthesis from exogenous sphingoid bases. Converts S1P to sphingosine, which is readily metabolized to ceramide via ceramide synthase. In concert with sphingosine kinase 2 (SphK2), recycles sphingosine into ceramide through a phosphorylation/dephosphorylation cycle. Regulates endoplasmic-to-Golgi trafficking of ceramides, resulting in the regulation of ceramide levels in the endoplasmic reticulum, preferentially long-chain ceramide species, and influences the anterograde membrane transport of both ceramide and proteins from the endoplasmic reticulum to the Golgi apparatus. The modulation of intracellular ceramide levels in turn regulates apoptosis. Via S1P levels, modulates resting tone, intracellular Ca(2+) and myogenic vasoconstriction in resistance arteries. Also involved in unfolded protein response (UPR) and ER stress-induced autophagy via regulation of intracellular S1P levels. Involved in the regulation of epidermal homeostasis and keratinocyte differentiation. The sequence is that of Sphingosine-1-phosphate phosphatase 1 from Rattus norvegicus (Rat).